Here is a 135-residue protein sequence, read N- to C-terminus: MTNAKTAKFAWNEENTQKAVSMYQQLINENGLDFANSDGLKEIAKAVGAASPVSVRSKLTSAKAYQKSDKPRKVGGGSSIRKAHYVRVIAKHAIDSGIIKDADDLASLESAKLETLDAVAQLLGVADEVKQAAGE.

The protein belongs to the T5likevirus A2 protein family. Interacts with A1 protein; the two proteins form heterooligomers.

Its function is as follows. Involved, together with A1 protein, in the second step transfer (SST) which allows the completion of viral DNA into the host cell. This chain is Protein A2 (A2), found in Escherichia phage T5 (Enterobacteria phage T5).